We begin with the raw amino-acid sequence, 248 residues long: Small ribosomal subunit protein uS3 (248 aa).

Positions 39–113 constitute a KH type-2 domain; the sequence is IRAYLTKQLS…TIRINVVEVT (75 aa). Residues 218–248 are disordered; the sequence is ERPEQKVPLQQPKRRQQRRRPTFEDRSAVEA. A compositionally biased stretch (basic and acidic residues) spans 238 to 248; the sequence is PTFEDRSAVEA.

Belongs to the universal ribosomal protein uS3 family. In terms of assembly, part of the 30S ribosomal subunit. Forms a tight complex with proteins S10 and S14.

In terms of biological role, binds the lower part of the 30S subunit head. Binds mRNA in the 70S ribosome, positioning it for translation. This is Small ribosomal subunit protein uS3 from Synechococcus sp. (strain JA-3-3Ab) (Cyanobacteria bacterium Yellowstone A-Prime).